The following is a 478-amino-acid chain: Aspartyl/glutamyl-tRNA(Asn/Gln) amidotransferase subunit B (478 aa).

The protein belongs to the GatB/GatE family. GatB subfamily. In terms of assembly, heterotrimer of A, B and C subunits.

It catalyses the reaction L-glutamyl-tRNA(Gln) + L-glutamine + ATP + H2O = L-glutaminyl-tRNA(Gln) + L-glutamate + ADP + phosphate + H(+). The catalysed reaction is L-aspartyl-tRNA(Asn) + L-glutamine + ATP + H2O = L-asparaginyl-tRNA(Asn) + L-glutamate + ADP + phosphate + 2 H(+). Its function is as follows. Allows the formation of correctly charged Asn-tRNA(Asn) or Gln-tRNA(Gln) through the transamidation of misacylated Asp-tRNA(Asn) or Glu-tRNA(Gln) in organisms which lack either or both of asparaginyl-tRNA or glutaminyl-tRNA synthetases. The reaction takes place in the presence of glutamine and ATP through an activated phospho-Asp-tRNA(Asn) or phospho-Glu-tRNA(Gln). The polypeptide is Aspartyl/glutamyl-tRNA(Asn/Gln) amidotransferase subunit B (Lachnoclostridium phytofermentans (strain ATCC 700394 / DSM 18823 / ISDg) (Clostridium phytofermentans)).